Here is a 128-residue protein sequence, read N- to C-terminus: Probable soluble cytochrome b562 2 (128 aa).

An N-terminal signal peptide occupies residues 1 to 22 (MGKTLMALITAALLSTSSLVMA). The heme b site is built by methionine 29 and histidine 124.

This sequence belongs to the cytochrome b562 family. Requires heme b as cofactor.

The protein localises to the periplasm. Its function is as follows. Electron-transport protein of unknown function. This Yersinia pestis protein is Probable soluble cytochrome b562 2 (cybC2).